The sequence spans 155 residues: Protein SprT-like (155 aa).

The SprT-like domain occupies 6-148 (LQRLVERVSL…VCGQCGGKLM (143 aa)). H67 contributes to the Zn(2+) binding site. E68 is an active-site residue. A Zn(2+)-binding site is contributed by H71.

It belongs to the SprT family. Zn(2+) is required as a cofactor.

The protein resides in the cytoplasm. The chain is Protein SprT-like from Geobacillus sp. (strain WCH70).